A 257-amino-acid polypeptide reads, in one-letter code: UPF0246 protein ACICU_02469 (257 aa).

It belongs to the UPF0246 family.

This is UPF0246 protein ACICU_02469 from Acinetobacter baumannii (strain ACICU).